A 391-amino-acid chain; its full sequence is MFGSATRSDATRVLLLGSGELGKEVAIECQRLGLEVIAVDRYDNAPAMQVAHRSHVIDMLDGDALRKLIELEQPHYVVPEIEAIATDTLVSLEAEGVNIVPTANATKLTMNREGIRRLAAEDLQIPTSPFEFADQYDDFVAAVERVGTPCVVKPIMSSSGKGQSVIKTPADIEASWQYAQEGGRAGTGRVVVEGFIKFDYEITLLTTRAVDGIHFCAPIGHRQEEGDYRESWQPQQMSDEALKAAQDVAEKVVNALGGYGLFGVELFVRGNEVLFNEVSPRPHDTGMVTLISQDLSEFALHVRAFLGLPIQQIIQYGPAASAVILGNGISSNIRFDNLTAALSRPQTQVRLFGKPEINGRRRLGVALTRREDTKQAVSDAINAAADVKVIY.

Residues 20 to 21 (EL) and Glu80 each bind N(1)-(5-phospho-beta-D-ribosyl)glycinamide. ATP contacts are provided by residues Arg112, Lys153, 158-163 (SSGKGQ), 193-196 (EGFI), and Glu201. Positions 117–306 (RLAAEDLQIP…EFALHVRAFL (190 aa)) constitute an ATP-grasp domain. Residues Glu265 and Glu277 each contribute to the Mg(2+) site. N(1)-(5-phospho-beta-D-ribosyl)glycinamide is bound by residues Asp284, Lys354, and 361 to 362 (RR).

Belongs to the PurK/PurT family. As to quaternary structure, homodimer.

The catalysed reaction is N(1)-(5-phospho-beta-D-ribosyl)glycinamide + formate + ATP = N(2)-formyl-N(1)-(5-phospho-beta-D-ribosyl)glycinamide + ADP + phosphate + H(+). It functions in the pathway purine metabolism; IMP biosynthesis via de novo pathway; N(2)-formyl-N(1)-(5-phospho-D-ribosyl)glycinamide from N(1)-(5-phospho-D-ribosyl)glycinamide (formate route): step 1/1. Its function is as follows. Involved in the de novo purine biosynthesis. Catalyzes the transfer of formate to 5-phospho-ribosyl-glycinamide (GAR), producing 5-phospho-ribosyl-N-formylglycinamide (FGAR). Formate is provided by PurU via hydrolysis of 10-formyl-tetrahydrofolate. The chain is Formate-dependent phosphoribosylglycinamide formyltransferase from Photobacterium profundum (strain SS9).